Consider the following 471-residue polypeptide: 5-hydroxytryptamine receptor 2A (471 aa).

At 1–80 the chain is on the extracellular side; the sequence is MEILCEDNTS…LQEKNWSALL (80 aa). Asn-8, Asn-38, Asn-44, Asn-51, and Asn-54 each carry an N-linked (GlcNAc...) asparagine glycan. Residues 81–97 form a helical membrane-spanning segment; sequence TAVVIILTIAGNILVIM. Residues 98–111 lie on the Cytoplasmic side of the membrane; that stretch reads AVSLEKKLQNATNY. A helical membrane pass occupies residues 112 to 137; it reads FLMSLAIADMLLGFLVMPVSMLTILY. The Extracellular portion of the chain corresponds to 138–146; it reads GYRWPLPSK. Residues 147–171 form a helical membrane-spanning segment; the sequence is LCAVWIYLDVLFSTASIMHLCAISL. Cys-148 and Cys-227 are disulfide-bonded. Residue Asp-155 coordinates serotonin. The short motif at 172 to 174 is the DRY motif; important for ligand-induced conformation changes element; sequence DRY. At 172–191 the chain is on the cytoplasmic side; it reads DRYVAIQNPIHHSRFNSRTK. Residues 192–215 form a helical membrane-spanning segment; that stretch reads AFLKIIAVWTISVGVSMPIPVFGL. At 216 to 232 the chain is on the extracellular side; it reads QDDSKVFKQGSCLLADD. The helical transmembrane segment at 233-258 threads the bilayer; sequence NFVLIGSFVAFFIPLTIMVITYFLTI. At 259 to 322 the chain is on the cytoplasmic side; the sequence is KSLQKEATLC…QSISNEQKAC (64 aa). A Phosphoserine modification is found at Ser-280. The helical transmembrane segment at 323–348 threads the bilayer; it reads KVLGIVFFLFVVMWCPFFITNIMAVI. Asn-343 lines the serotonin pocket. A disulfide bond links Cys-349 and Cys-353. At 349–356 the chain is on the extracellular side; sequence CKESCNEH. A helical membrane pass occupies residues 357–382; that stretch reads VIGALLNVFVWIGYLSSAVNPLVYTL. The short motif at 376–380 is the NPxxY motif; important for ligand-induced conformation changes and signaling element; that stretch reads NPLVY. Residues 383-471 are Cytoplasmic-facing; it reads FNKTYRSAFS…NTVNEKVSCV (89 aa). The PDZ-binding motif lies at 469–471; sequence SCV.

Belongs to the G-protein coupled receptor 1 family. As to quaternary structure, interacts (via C-terminus) with MPDZ and PATJ. May interact (via C-terminus) with MPP3, PRDX6, DLG4, DLG1, CASK, APBA1 and MAGI2. Interacts with GRM2 and DRD2; this may affect signaling.

The protein resides in the cell membrane. It is found in the cell projection. The protein localises to the dendrite. Its subcellular location is the axon. It localises to the cytoplasmic vesicle. The protein resides in the membrane. It is found in the caveola. The protein localises to the presynapse. With respect to regulation, G-protein coupled receptor activity is regulated by lipids: oleamide increases HTR2A-mediated activity. G-protein coupled receptor for 5-hydroxytryptamine (serotonin). Also functions as a receptor for various drugs and psychoactive substances, including mescaline, psilocybin, 1-(2,5-dimethoxy-4-iodophenyl)-2-aminopropane (DOI) and lysergic acid diethylamide (LSD). Ligand binding causes a conformation change that triggers signaling via guanine nucleotide-binding proteins (G proteins) and modulates the activity of downstream effectors. HTR2A is coupled to G(q)/G(11) G alpha proteins and activates phospholipase C-beta, releasing diacylglycerol (DAG) and inositol 1,4,5-trisphosphate (IP3) second messengers that modulate the activity of phosphatidylinositol 3-kinase and promote the release of Ca(2+) ions from intracellular stores, respectively. Beta-arrestin family members inhibit signaling via G proteins and mediate activation of alternative signaling pathways. Affects neural activity, perception, cognition and mood. Plays a role in the regulation of behavior, including responses to anxiogenic situations and psychoactive substances. Plays a role in intestinal smooth muscle contraction, and may play a role in arterial vasoconstriction. The polypeptide is 5-hydroxytryptamine receptor 2A (HTR2A) (Cricetulus griseus (Chinese hamster)).